A 503-amino-acid polypeptide reads, in one-letter code: 26S proteasome non-ATPase regulatory subunit 5 (503 aa).

Alanine 2 carries the post-translational modification N-acetylalanine.

This sequence belongs to the proteasome subunit S5B/HSM3 family. In terms of assembly, interacts with PSMC1, PSMC2, PSMD1 and PSMD6. Part of transient complex containing PSMD5, PSMC2, PSMC1 and PSMD2 formed during the assembly of the 26S proteasome.

Its function is as follows. Acts as a chaperone during the assembly of the 26S proteasome, specifically of the base subcomplex of the PA700/19S regulatory complex (RC). In the initial step of the base subcomplex assembly is part of an intermediate PSMD5:PSMC2:PSMC1:PSMD2 module which probably assembles with a PSMD10:PSMC4:PSMC5:PAAF1 module followed by dissociation of PSMD5. This Bos taurus (Bovine) protein is 26S proteasome non-ATPase regulatory subunit 5 (PSMD5).